A 496-amino-acid polypeptide reads, in one-letter code: Ribose import ATP-binding protein RbsA (496 aa).

ABC transporter domains follow at residues 5–241 and 252–496; these read LQMK…VGRE and SPGE…VGGE. 37 to 44 serves as a coordination point for ATP; sequence GENGAGKS.

It belongs to the ABC transporter superfamily. Ribose importer (TC 3.A.1.2.1) family. In terms of assembly, the complex is composed of an ATP-binding protein (RbsA), two transmembrane proteins (RbsC) and a solute-binding protein (RbsB).

The protein resides in the cell membrane. The enzyme catalyses D-ribose(out) + ATP + H2O = D-ribose(in) + ADP + phosphate + H(+). Its function is as follows. Part of the ABC transporter complex RbsABC involved in ribose import. Responsible for energy coupling to the transport system. The chain is Ribose import ATP-binding protein RbsA from Caldanaerobacter subterraneus subsp. tengcongensis (strain DSM 15242 / JCM 11007 / NBRC 100824 / MB4) (Thermoanaerobacter tengcongensis).